The chain runs to 1605 residues: Zinc finger protein jing homolog (1605 aa).

Residues 1 to 15 (MQHQSLSVRNSSGIS) are compositionally biased toward polar residues. Disordered regions lie at residues 1-28 (MQHQ…VRSS), 60-117 (QWPW…QQSN), 359-388 (TRKV…TSDP), 441-468 (QQHQ…TQAQ), 856-877 (STTS…PPKL), 917-947 (TKAT…ASCT), and 991-1213 (NDSG…TDFL). Residues 64–117 (NTSNNTNATNSNNVQSNNNSSTATSNSSTNSNNSPAVNTPTTQNQSQPTTQQSN) show a composition bias toward low complexity. A compositionally biased stretch (polar residues) spans 991-1000 (NDSGIVANSS). The span at 1021–1030 (PQKKDEESRQ) shows a compositional bias: basic and acidic residues. Residues 1035–1049 (SPVPSPSPLSEPPVI) are compositionally biased toward pro residues. 2 stretches are compositionally biased toward acidic residues: residues 1053–1090 (SEPE…DEPH) and 1099–1110 (SSEAVELPELED). Over residues 1112-1126 (QPSPPLPCELPPPPT) the composition is skewed to pro residues. The span at 1135–1149 (LSLPPSQKSPKSLLL) shows a compositional bias: low complexity. The span at 1165-1201 (QESMSSDQDYSNQSPLDESSPTGSAEPSESQRSTTPV) shows a compositional bias: polar residues. The C2H2-type 1 zinc-finger motif lies at 1260-1285 (GVCYWSNCDAQFDTSSKLLDHLQIQH). The C2H2-type 2; degenerate zinc-finger motif lies at 1293–1320 (FACLWDGCKVHNKESCSRRWLERHVLSH). The C2H2-type 3 zinc finger occupies 1326 to 1350 (HKCIVAGCGMRFGSQLALEKHVNHH). Disordered stretches follow at residues 1352-1371 (NNTD…LPKV) and 1511-1605 (CSRS…SSTS). 2 stretches are compositionally biased toward low complexity: residues 1511 to 1537 (CSRS…SLIS) and 1556 to 1605 (KQSY…SSTS).

This sequence belongs to the AEBP2/jing C2H2-type zinc-finger family.

It localises to the nucleus. Functionally, may functionally interact with Polycomb group (PcG) and trithorax group (trxG) proteins to repress transcription. This Aedes aegypti (Yellowfever mosquito) protein is Zinc finger protein jing homolog.